The chain runs to 357 residues: Ribosomal RNA large subunit methyltransferase M (357 aa).

Residues serine 183, 216–219, aspartate 235, aspartate 255, and aspartate 271 each bind S-adenosyl-L-methionine; that span reads APGG. Lysine 300 (proton acceptor) is an active-site residue.

The protein belongs to the class I-like SAM-binding methyltransferase superfamily. RNA methyltransferase RlmE family. RlmM subfamily. Monomer.

It localises to the cytoplasm. The catalysed reaction is cytidine(2498) in 23S rRNA + S-adenosyl-L-methionine = 2'-O-methylcytidine(2498) in 23S rRNA + S-adenosyl-L-homocysteine + H(+). In terms of biological role, catalyzes the 2'-O-methylation at nucleotide C2498 in 23S rRNA. The protein is Ribosomal RNA large subunit methyltransferase M of Pseudomonas syringae pv. tomato (strain ATCC BAA-871 / DC3000).